We begin with the raw amino-acid sequence, 311 residues long: Methionyl-tRNA formyltransferase (311 aa).

110–113 (SLLP) contributes to the (6S)-5,6,7,8-tetrahydrofolate binding site.

The protein belongs to the Fmt family.

It carries out the reaction L-methionyl-tRNA(fMet) + (6R)-10-formyltetrahydrofolate = N-formyl-L-methionyl-tRNA(fMet) + (6S)-5,6,7,8-tetrahydrofolate + H(+). Attaches a formyl group to the free amino group of methionyl-tRNA(fMet). The formyl group appears to play a dual role in the initiator identity of N-formylmethionyl-tRNA by promoting its recognition by IF2 and preventing the misappropriation of this tRNA by the elongation apparatus. This chain is Methionyl-tRNA formyltransferase, found in Streptococcus pyogenes serotype M12 (strain MGAS2096).